We begin with the raw amino-acid sequence, 597 residues long: ATP-dependent lipid A-core flippase (597 aa).

6 helical membrane passes run 26 to 46 (LWPYIKPLIWVLIGAIVAMAV), 76 to 96 (WFVPAAVIGLALIRSLSQYAS), 138 to 158 (AIVFEVNQILNVLLSVLVTLV), 164 to 184 (VVFLLGYLFYLNWRLTLIVAV), 263 to 283 (QPLTQFLASIALAVVITIAVV), and 292 to 312 (VGGFVAFVTSMLLIISPLKHL). Residues 38-321 (IGAIVAMAVS…LMDVNQPLQR (284 aa)) form the ABC transmembrane type-1 domain. Positions 353 to 590 (VEFRDVSFVY…DGLYAHLHRI (238 aa)) constitute an ABC transporter domain. 390 to 397 (GPSGSGKT) provides a ligand contact to ATP.

It belongs to the ABC transporter superfamily. Lipid exporter (TC 3.A.1.106) family. As to quaternary structure, homodimer.

The protein resides in the cell inner membrane. The enzyme catalyses ATP + H2O + lipid A-core oligosaccharideSide 1 = ADP + phosphate + lipid A-core oligosaccharideSide 2.. Functionally, involved in lipopolysaccharide (LPS) biosynthesis. Translocates lipid A-core from the inner to the outer leaflet of the inner membrane. Transmembrane domains (TMD) form a pore in the inner membrane and the ATP-binding domain (NBD) is responsible for energy generation. In Paraburkholderia xenovorans (strain LB400), this protein is ATP-dependent lipid A-core flippase.